The following is a 153-amino-acid chain: Ribosome maturation factor RimP (153 aa).

Belongs to the RimP family.

Its subcellular location is the cytoplasm. Required for maturation of 30S ribosomal subunits. The polypeptide is Ribosome maturation factor RimP (Coxiella burnetii (strain CbuG_Q212) (Coxiella burnetii (strain Q212))).